A 76-amino-acid chain; its full sequence is Translational regulator CsrA (76 aa).

Belongs to the CsrA/RsmA family. In terms of assembly, homodimer; the beta-strands of each monomer intercalate to form a hydrophobic core, while the alpha-helices form wings that extend away from the core.

The protein resides in the cytoplasm. Its function is as follows. A translational regulator that binds mRNA to regulate translation initiation and/or mRNA stability. Usually binds in the 5'-UTR at or near the Shine-Dalgarno sequence preventing ribosome-binding, thus repressing translation. Its main target seems to be the major flagellin gene, while its function is anatagonized by FliW. The chain is Translational regulator CsrA from Pseudothermotoga lettingae (strain ATCC BAA-301 / DSM 14385 / NBRC 107922 / TMO) (Thermotoga lettingae).